A 57-amino-acid chain; its full sequence is Large ribosomal subunit protein bL32 (57 aa).

Over residues 1–19 (MAVPKRRMSRANTRSRRAQ) the composition is skewed to basic residues. The tract at residues 1–20 (MAVPKRRMSRANTRSRRAQW) is disordered.

The protein belongs to the bacterial ribosomal protein bL32 family.

This is Large ribosomal subunit protein bL32 from Mycobacterium avium (strain 104).